A 611-amino-acid polypeptide reads, in one-letter code: Guanylate-binding protein 6 (611 aa).

The tract at residues 1 to 308 (MTQPQMAPIC…NAINSGAVPC (308 aa)) is GTPase domain (Globular). A GB1/RHD3-type G domain is found at 33-275 (SQPVVVVAIV…FVSYIFTYAK (243 aa)). GTP contacts are provided by residues 43–50 (GLYRTGKS), 65–67 (LGS), and 95–99 (DTEGL).

It belongs to the TRAFAC class dynamin-like GTPase superfamily. GB1/RHD3 GTPase family. GB1 subfamily.

It localises to the cytoplasmic vesicle. It catalyses the reaction GTP + H2O = GDP + phosphate + H(+). Interferon (IFN)-inducible GTPase that plays important roles in innate immunity against a diverse range of bacterial, viral and protozoan pathogens, such as bacterial pathogens Listeria monocytogenes and Mycobacterium bovis BCG as well as the protozoan pathogen Toxoplasma gondii. Confers protection to several pathogens, including the bacterial pathogens Listeria monocytogenes and Mycobacterium bovis BCG as well as the protozoan pathogen Toxoplasma gondii. This Mus musculus (Mouse) protein is Guanylate-binding protein 6 (Gbp6).